We begin with the raw amino-acid sequence, 232 residues long: Triosephosphate isomerase (232 aa).

6–8 (NLK) contacts substrate. Catalysis depends on H91, which acts as the Electrophile. E158 acts as the Proton acceptor in catalysis. The substrate site is built by G164 and S194.

It belongs to the triosephosphate isomerase family. As to quaternary structure, homodimer.

The protein localises to the cytoplasm. It carries out the reaction D-glyceraldehyde 3-phosphate = dihydroxyacetone phosphate. The protein operates within carbohydrate biosynthesis; gluconeogenesis. It participates in carbohydrate degradation; glycolysis; D-glyceraldehyde 3-phosphate from glycerone phosphate: step 1/1. Functionally, involved in the gluconeogenesis. Catalyzes stereospecifically the conversion of dihydroxyacetone phosphate (DHAP) to D-glyceraldehyde-3-phosphate (G3P). This is Triosephosphate isomerase from Campylobacter hominis (strain ATCC BAA-381 / DSM 21671 / CCUG 45161 / LMG 19568 / NCTC 13146 / CH001A).